The primary structure comprises 349 residues: MQTYGNPNVTYGWWAGNSGVTNRSGKFIAAHAAHTGLIAFGCGAATLVELAGFDPSLPMGHQSSLFLAHLASVGIGFDDAGVWTGVGVANIAILHLILSMVYGGGGLLHSVYFTGDMQDSQVPQARKFKLEWDNPDNQTFILGHHLLFFGVANIWFVEWARIHGIYDPAIEAIRQVNYNLDLTQIWNHQFDFLAIDSLEDVMGGHAFLAFFQLGGGAFHIATKQIGTYTKFKGKELLSAEAILSWSLAGIGWMACVAAFWAATNTTVYPEAWYGEVLQIKFGVSPYWIDTVPGGTAFLGHTTRAALVNVHYYLGFFFIQGHLWHALRAMGFDFKRLLDKTGPFGIPRTL.

6 helical membrane passes run 27-47, 57-77, 91-113, 201-221, 241-261, and 306-326; these read FIAA…AATL, LPMG…GIGF, IAIL…SVYF, VMGG…FHIA, AILS…AFWA, and LVNV…WHAL.

It belongs to the PsbB/PsbC family. IsiA/Pcb subfamily. In terms of assembly, the antenna complex consists of divinyl chlorophylls (a and b) and divinyl chlorophyll a/b binding proteins and binds more divinyl chlorophyll b than does the antenna complex from high-light-adapted Prochlorococcus. Requires divinyl chlorophyll a as cofactor. The cofactor is divinyl chlorophyll b.

It is found in the cellular thylakoid membrane. In terms of biological role, the antenna complex functions as a light receptor, it captures and delivers excitation energy to photosystems II and I. The Prochlorales pcb genes are not related to higher plant LHCs. This chain is Divinyl chlorophyll a/b light-harvesting protein PcbB (pcbB), found in Prochlorococcus marinus (strain SARG / CCMP1375 / SS120).